A 338-amino-acid chain; its full sequence is MVGTAEGGAERAVRRWVDAAGGRLVLDGGLATELEANGADLNDPLWSAKCLLSSPHLIRKVHMDYLEAGANIIITASYQATIQGFESKGFSKEQSENLLTKSVQIALEAREMFLKEHLEKSTPIQHPILVAAALGSYGAYLADGSEYSGDYGEAGTKEFLKDFHRRRLQVLAEAGPDLIAFETIPNKLEAQAYVELLEECNINIPSWLSFNSKDGVHVVSGDSLIECATIADKCAKVGAVGINCTPPRFIHGLILSIRKVTDKPILIYPNSGERYDGEKKEWVESTGVSDGDFVSYVNEWCKDGAALIGGCCRTTPNTIRAIHRTLNQGCHKHQLPVA.

Residues 12–326 (AVRRWVDAAG…NTIRAIHRTL (315 aa)) enclose the Hcy-binding domain. Zn(2+) contacts are provided by C244, C311, and C312.

In terms of assembly, monomer. Zn(2+) serves as cofactor.

The catalysed reaction is S-methyl-L-methionine + L-homocysteine = 2 L-methionine + H(+). In terms of biological role, catalyzes methyl transfer from S-methylmethionine (SMM) to adenosyl-L-homocysteine (AdoMet). SMM degradation (by HMT-1, HMT-2, HMT-3 and HMT-4) and biosynthesis (by MMT1) constitute the SMM cycle in plants, which is probably required to achieve short term control of AdoMet level. This Zea mays (Maize) protein is Homocysteine S-methyltransferase 3 (HMT-3).